We begin with the raw amino-acid sequence, 126 residues long: Glycine cleavage system H protein (126 aa).

The Lipoyl-binding domain occupies 22–104 (IATVGITAFA…YGRGWLFKVE (83 aa)). At Lys-63 the chain carries N6-lipoyllysine.

The protein belongs to the GcvH family. The glycine cleavage system is composed of four proteins: P, T, L and H. Requires (R)-lipoate as cofactor.

Functionally, the glycine cleavage system catalyzes the degradation of glycine. The H protein shuttles the methylamine group of glycine from the P protein to the T protein. This is Glycine cleavage system H protein from Thermobifida fusca (strain YX).